Consider the following 255-residue polypeptide: 1-(5-phosphoribosyl)-5-[(5-phosphoribosylamino)methylideneamino] imidazole-4-carboxamide isomerase (255 aa).

Catalysis depends on Asp12, which acts as the Proton acceptor. The active-site Proton donor is Asp131.

This sequence belongs to the HisA/HisF family.

Its subcellular location is the cytoplasm. It catalyses the reaction 1-(5-phospho-beta-D-ribosyl)-5-[(5-phospho-beta-D-ribosylamino)methylideneamino]imidazole-4-carboxamide = 5-[(5-phospho-1-deoxy-D-ribulos-1-ylimino)methylamino]-1-(5-phospho-beta-D-ribosyl)imidazole-4-carboxamide. It participates in amino-acid biosynthesis; L-histidine biosynthesis; L-histidine from 5-phospho-alpha-D-ribose 1-diphosphate: step 4/9. This chain is 1-(5-phosphoribosyl)-5-[(5-phosphoribosylamino)methylideneamino] imidazole-4-carboxamide isomerase, found in Cutibacterium acnes (strain DSM 16379 / KPA171202) (Propionibacterium acnes).